The sequence spans 604 residues: MCGIMGAVSERDISKILLEGLRRLEYRGYDSAGIAVIDSQDRLKRVRIQGKVQNLADAMQETAIAGNTGIAHTRWATHGKPSEQNAHPHLSHGEIALVHNGIIENHEHLRQQLITYGYQFTSETDTEVAAHLIHYHYQQHENLLLAVQKAAAEMQGAFALGVIHQKRPEELVAIRKGSPLVLGFGIGENFIASDALALRSFAQSVIYMEEGDSACVTTQDIKVYDSNRILVQRAVHPLNSDSEIVNKGPYRHFMLKEIFEQSKVITDTLESRINSIDVLRASFGEKASHIFPMVKNIHIVACGTSYHAGMIAKYWLESLAGLPTQVEIASEYRYRDVVVPDNTLFITVSQSGETADTLAALFKAKQSNYLASLAICNVATSTLVREADCVFLTRAGIEIGVASTKAFTTQLAAFLMLAAALCKDNRAQEVLRQLQELPACCERVLQMNEEVESLASLFVNKVHALFLGRGVQYPVALEGALKLKEISYIHAEAYPAGELKHGPLALVDKDMPVIAVAPNDELLDKLKSNLHEVSARGGQLFVFVDDSQNWKANGARLIKVPSCGAWLAPIVYTIPLQLLAYHVAVAKGTDVDQPRNLAKSVTVE.

Residue Cys-2 is the Nucleophile; for GATase activity of the active site. Residues Cys-2–Gln-219 enclose the Glutamine amidotransferase type-2 domain. SIS domains lie at Leu-279–Ala-427 and Leu-454–Pro-594. The active-site For Fru-6P isomerization activity is Lys-599.

Homodimer.

The protein localises to the cytoplasm. The enzyme catalyses D-fructose 6-phosphate + L-glutamine = D-glucosamine 6-phosphate + L-glutamate. Catalyzes the first step in hexosamine metabolism, converting fructose-6P into glucosamine-6P using glutamine as a nitrogen source. This chain is Glutamine--fructose-6-phosphate aminotransferase [isomerizing], found in Legionella pneumophila (strain Paris).